Reading from the N-terminus, the 155-residue chain is 6,7-dimethyl-8-ribityllumazine synthase (155 aa).

5-amino-6-(D-ribitylamino)uracil contacts are provided by residues Trp18, 52–54 (AFE), and 76–78 (LVV). The Proton donor role is filled by Arg84. Position 109 (Ser109) interacts with 5-amino-6-(D-ribitylamino)uracil. A (2S)-2-hydroxy-3-oxobutyl phosphate-binding site is contributed by His123.

This sequence belongs to the DMRL synthase family.

The enzyme catalyses (2S)-2-hydroxy-3-oxobutyl phosphate + 5-amino-6-(D-ribitylamino)uracil = 6,7-dimethyl-8-(1-D-ribityl)lumazine + phosphate + 2 H2O + H(+). It functions in the pathway cofactor biosynthesis; riboflavin biosynthesis; riboflavin from 2-hydroxy-3-oxobutyl phosphate and 5-amino-6-(D-ribitylamino)uracil: step 1/2. Functionally, catalyzes the formation of 6,7-dimethyl-8-ribityllumazine by condensation of 5-amino-6-(D-ribitylamino)uracil with 3,4-dihydroxy-2-butanone 4-phosphate. This is the penultimate step in the biosynthesis of riboflavin. The polypeptide is 6,7-dimethyl-8-ribityllumazine synthase (Rhodococcus erythropolis (Arthrobacter picolinophilus)).